The chain runs to 603 residues: Sesquiterpene synthase Cad (603 aa).

The segment covering 1–13 has biased composition (polar residues); the sequence is MAEVGLSQNSYAS. The interval 1-23 is disordered; sequence MAEVGLSQNSYASANHDKKSEQQ. Mg(2+)-binding residues include D357, D361, D498, and E506. A DDXXD motif motif is present at residues 357–361; it reads DDIFD.

This sequence belongs to the terpene synthase family. Tpsa subfamily. Mg(2+) is required as a cofactor. The cofactor is Mn(2+). In terms of tissue distribution, mostly expressed in leaves and, to a lower extent, in stems and xylem.

It catalyses the reaction (2E,6E)-farnesyl diphosphate = beta-cadinene + diphosphate. Its pathway is secondary metabolite biosynthesis; terpenoid biosynthesis. Its function is as follows. Sesquiterpene synthase involved in the biosynthesis of volatile compounds. Mediates the conversion of (2E,6E)-farnesyl diphosphate (FPP) into beta-cadinene. Not active with geranyl diphosphate (GPP) and geranylgeranyl diphosphate (GGPP) as substrates. This is Sesquiterpene synthase Cad from Chamaecyparis formosensis (Formosan cypress).